Reading from the N-terminus, the 266-residue chain is Glucosamine-6-phosphate deaminase (266 aa).

Asp-72 serves as the catalytic Proton acceptor; for enolization step. Asp-141 acts as the For ring-opening step in catalysis. His-143 (proton acceptor; for ring-opening step) is an active-site residue. The active-site For ring-opening step is the Glu-148.

Belongs to the glucosamine/galactosamine-6-phosphate isomerase family. NagB subfamily. Homohexamer.

It carries out the reaction alpha-D-glucosamine 6-phosphate + H2O = beta-D-fructose 6-phosphate + NH4(+). It functions in the pathway amino-sugar metabolism; N-acetylneuraminate degradation; D-fructose 6-phosphate from N-acetylneuraminate: step 5/5. Allosterically activated by N-acetylglucosamine 6-phosphate (GlcNAc6P). Catalyzes the reversible isomerization-deamination of glucosamine 6-phosphate (GlcN6P) to form fructose 6-phosphate (Fru6P) and ammonium ion. The chain is Glucosamine-6-phosphate deaminase from Erwinia tasmaniensis (strain DSM 17950 / CFBP 7177 / CIP 109463 / NCPPB 4357 / Et1/99).